A 180-amino-acid chain; its full sequence is Large ribosomal subunit protein uL5 (180 aa).

It belongs to the universal ribosomal protein uL5 family. In terms of assembly, part of the 50S ribosomal subunit; part of the 5S rRNA/L5/L18/L25 subcomplex. Contacts the 5S rRNA and the P site tRNA. Forms a bridge to the 30S subunit in the 70S ribosome.

Functionally, this is one of the proteins that bind and probably mediate the attachment of the 5S RNA into the large ribosomal subunit, where it forms part of the central protuberance. In the 70S ribosome it contacts protein S13 of the 30S subunit (bridge B1b), connecting the 2 subunits; this bridge is implicated in subunit movement. Contacts the P site tRNA; the 5S rRNA and some of its associated proteins might help stabilize positioning of ribosome-bound tRNAs. In Rippkaea orientalis (strain PCC 8801 / RF-1) (Cyanothece sp. (strain PCC 8801)), this protein is Large ribosomal subunit protein uL5.